A 1288-amino-acid chain; its full sequence is MGCTPSHSDLVNSVAKSGIQFLKKPKAIRPGCQGGSERGSIPLLVKNSTCYDAGEGLAEEQPSPRRNQTTAKGLCQLMGDPASGKRKDMEGLIPGTKTSSSQLNKSQSHMAKDIPFKTQGSHGSQGADFSGDESEESSTQDTSKWKRTAKCHTSSTQSHCYQTIHPAHEPEGKVDFPEPLVKAHQQAYTYLHSSLSKYEAILCIIHQATQTRELLQPMVSFLLLCFEEISQLLGEISKDGEVLLQEVREDLAWPLKKREPQEQPNLLQQLLQYTVSKLQVLNGTVASLTGSFLEGSSSYLHSTATHLENKLSTKRNVDERLLRALRQLESLASGCGDPGVQGLPLCSEDSGIGADNESVQSVDKLGKQTSWDLAPEPEEWKSVTSPHTEARQSGHTWQQSPFCLGSGRPQDCLLSGAPMAKVQPRAQDEARSPCLSSTSPENITSPPLKLGTSTPCDSFGIGVSVEPHLSKTSRPMDASSLSDSEDSSPEEEEEDKMSSMSLCAWQEKTPHSRPQSSPADRESPFQARTRRLRSLQAQEMILKMKESISERIKFVPVPCGHQDWSEEEEGRTVVPPRPSTVSGSRRAPERQTRSQSESCLQSHVEDPTFQELRRVQRDLSQKLEAFYALGAKGQGQSQEQILQPRAAAVWPNGTCRVSPSNTTSRLKASLTKNFSILPSQDKSILQKCNPHPEDEQGKAGKLPNAIPSGEVSEAAKATDWNVRGCPTRTSVKKLIETFSPTESLRMLGDSKDAGASPCLRNCIMPPRFPKYTGLAPLYPKPQISPASGRESLKMGIGWKPLAPIFPPLPKAEAAKSEELSCEMEGNLEHLPPPPMEVLMDKSFASLESPESSKSTENSPKETQEPGPGEAGPTRRTWASPKLRASVSPLDLLPSKSTASLTKPHSTGPGSGRSSCQPRKPALDLSSPPATSQSPEVKGGTWSQAEKATSLYRQPRKAIAWHHSGPPSGQNRTSESSLARPRQSRERSPPVGRKASPTRTHWVPQADKRRRSLPSSYRPAQPSPSAVQTPPSPPVSPRVLSPPTTKRRTSPPHQPKLPNPPPESAPAQCKVPSPPTQHPEASPPFSIPSPSPPMSPSQEHKETRDSEDSQAVIAKVSGNTHSIFCPATSSLFEAKPPLSTAHPLTPPSLPPEAGGPLGNPAECWKNSSGPWLRADSQRRAALCALNPLPFLRRTASDRQPGGRPQPPTLDPTSTSYESQLGQNSSSEESPKKDTEPGSSPCSPELQGGTRRASPPEFCVLGHGLQPEPRTGHIQDKSQPEAQPQQEEVS.

Gly2 is lipidated: N-myristoyl glycine. The S-palmitoyl cysteine moiety is linked to residue Cys3. Disordered regions lie at residues 78-147 (MGDP…KWKR), 368-401 (QTSWDLAPEPEEWKSVTSPHTEARQSGHTWQQSP), 423-453 (QPRAQDEARSPCLSSTSPENITSPPLKLGTS), 467-527 (PHLS…PFQA), 563-605 (DWSE…SHVE), 686-707 (QKCNPHPEDEQGKAGKLPNAIP), 813-1109 (AAKS…EDSQ), 1132-1169 (EAKPPLSTAHPLTPPSLPPEAGGPLGNPAECWKNSSGP), and 1190-1288 (LRRT…EEVS). Composition is skewed to polar residues over residues 96–109 (TKTSSSQLNKSQSH), 382–401 (SVTSPHTEARQSGHTWQQSP), and 434–453 (CLSSTSPENITSPPLKLGTS). Over residues 483–495 (DSEDSSPEEEEED) the composition is skewed to acidic residues. Composition is skewed to polar residues over residues 848-857 (SPESSKSTEN), 894-904 (SKSTASLTKPH), 927-946 (PPATSQSPEVKGGTWSQAEK), and 966-976 (PSGQNRTSESS). The span at 1018 to 1028 (PAQPSPSAVQT) shows a compositional bias: low complexity. Composition is skewed to pro residues over residues 1051–1063 (PHQPKLPNPPPES) and 1071–1094 (PSPPTQHPEASPPFSIPSPSPPMS). A compositionally biased stretch (basic and acidic residues) spans 1097-1106 (QEHKETRDSE). The segment covering 1209 to 1226 (DPTSTSYESQLGQNSSSE) has biased composition (polar residues). Positions 1268 to 1277 (RTGHIQDKSQ) are enriched in basic and acidic residues. Positions 1278 to 1288 (PEAQPQQEEVS) are enriched in polar residues.

As to expression, specifically expressed in retina.

It is found in the cell projection. The protein resides in the cilium. Its subcellular location is the photoreceptor outer segment. The protein localises to the photoreceptor inner segment. In terms of biological role, plays an essential role for normal photoreceptor cell maintenance and vision. The polypeptide is Photoreceptor cilium actin regulator (Homo sapiens (Human)).